Reading from the N-terminus, the 408-residue chain is Argininosuccinate synthase (408 aa).

ATP-binding positions include 11–19 (AYSGGLDTS) and alanine 38. Tyrosine 91 and serine 96 together coordinate L-citrulline. Position 121 (glycine 121) interacts with ATP. L-aspartate contacts are provided by threonine 123, asparagine 127, and aspartate 128. Residue asparagine 127 participates in L-citrulline binding. L-citrulline-binding residues include arginine 131, serine 182, serine 191, glutamate 267, and tyrosine 279.

The protein belongs to the argininosuccinate synthase family. Type 1 subfamily. Homotetramer.

It localises to the cytoplasm. The catalysed reaction is L-citrulline + L-aspartate + ATP = 2-(N(omega)-L-arginino)succinate + AMP + diphosphate + H(+). The protein operates within amino-acid biosynthesis; L-arginine biosynthesis; L-arginine from L-ornithine and carbamoyl phosphate: step 2/3. The protein is Argininosuccinate synthase of Zymomonas mobilis subsp. mobilis (strain ATCC 31821 / ZM4 / CP4).